Consider the following 692-residue polypeptide: MNKKLEQLEKFKTNDKNPVYSTTNTGVSLSDDANSLKAGPRGPTLLEDFVLREKITHFDHERIPERIVHARGTGAHGYFLSYKDHSKLTKADFLSKQDKKTPVFIRISTVQGPRGSADTVRDVHGFAVKFYTDEGNYDLVGNNMPVFFIQDASSFPDFVHAVKMEPQNEMPTGGSAHDTFYDFCGLKPESAHSVLWVMSDRGIPISLRHQQGFGVHSYRFINQEGKSTFVKLHWKPLSGTCSLLWDEAQKIAGKDCDYHRRRFWEDIESGDFPQWELGAQLLDEDLQKKFDFDILDPTKLIPEELTPVIPLGRMVIDRNPDNFFAETEQVAFCVSHVVPGIDFSNDPLLQGRIFSYLDTQLSRLGGPNFNEIPINRPVCPFANNQRDGIHRMTINKGGASYFPNSIDKGYPLLKEPSANKGGFRPYPENISGTKSYDRSETFEDHFSQATMFWNSMSQHEKNHIIAAYTFEISKCSRPEVRTRYVNNILVNIDSVLAEKVAKNLGVKIEPTSTKPIKKIMVKPSPALSQPNLLSGDIVSRRISVIIEKGVDYDDVINFKDDMEKRGAMVMLVSSTLAQVECSGGEMLSPKGTIIGNPSIFFDAVYVPKSTEEATKILSDDGNFLHYILEAFKHLKTIAFGGSVSVIKELLRLPQDHGLLLGNGYKDITEQFFYSLAHHRVWERESKVSKIPA.

Catalysis depends on residues His-69 and Asn-142. A heme-binding site is contributed by Tyr-356.

The protein belongs to the catalase family. Heme is required as a cofactor.

It localises to the cytoplasm. It catalyses the reaction 2 H2O2 = O2 + 2 H2O. Functionally, occurs in almost all aerobically respiring organisms and serves to protect cells from the toxic effects of hydrogen peroxide. Its accumulation in prespore cells affords the spores protection from oxidation during prolonged dormancy. Required for normal developmental timing, possibly through a regulatory role in differentiation and morphogenesis. This chain is Catalase-B (catB), found in Dictyostelium discoideum (Social amoeba).